A 145-amino-acid polypeptide reads, in one-letter code: Putative antiporter subunit mnhG2 (145 aa).

3 helical membrane-spanning segments follow: residues 11–31 (IAAVMLLLGSFIALISAIGIV), 51–71 (VLLTLIGVLIYFIVNTGFFSV), and 72–92 (RLLLSLVFINLTSPVGMHLVA).

The protein belongs to the CPA3 antiporters (TC 2.A.63) subunit G family. In terms of assembly, may form a heterooligomeric complex that consists of seven subunits: mnhA2, mnhB2, mnhC2, mnhD2, mnhE2, mnhF2 and mnhG2.

It localises to the cell membrane. The sequence is that of Putative antiporter subunit mnhG2 (mnhG2) from Staphylococcus aureus (strain JH9).